The sequence spans 490 residues: Adenylosuccinate synthetase, chloroplastic (490 aa).

Residues 1–45 constitute a chloroplast transit peptide; it reads MSLSSLTLDSNPRFAVGGPYHRRYPPLHHPRSFVSCSAKRPAVSA. Ser46 is subject to N-acetylserine. Residues 77 to 83 and 105 to 107 contribute to the GTP site; these read GDEGKGK and GHT. Asp78 acts as the Proton acceptor in catalysis. Asp78 and Gly105 together coordinate Mg(2+). IMP is bound by residues 78–81, 103–106, Thr195, Arg209, Gln289, Thr304, and Arg368; these read DEGK and NAGH. His106 (proton donor) is an active-site residue. 364-370 serves as a coordination point for substrate; that stretch reads TTTGRPR. GTP contacts are provided by residues Arg370, 396-398, and 479-481; these read KLD and GIG.

It belongs to the adenylosuccinate synthetase family. As to quaternary structure, homodimer. The cofactor is Mg(2+).

It localises to the plastid. Its subcellular location is the chloroplast. The enzyme catalyses IMP + L-aspartate + GTP = N(6)-(1,2-dicarboxyethyl)-AMP + GDP + phosphate + 2 H(+). The protein operates within purine metabolism; AMP biosynthesis via de novo pathway; AMP from IMP: step 1/2. Its function is as follows. Plays an important role in the de novo pathway and in the salvage pathway of purine nucleotide biosynthesis. Catalyzes the first committed step in the biosynthesis of AMP from IMP. This Arabidopsis thaliana (Mouse-ear cress) protein is Adenylosuccinate synthetase, chloroplastic.